Here is a 92-residue protein sequence, read N- to C-terminus: Small ribosomal subunit protein uS19 (92 aa).

Belongs to the universal ribosomal protein uS19 family.

Protein S19 forms a complex with S13 that binds strongly to the 16S ribosomal RNA. This Sulfurovum sp. (strain NBC37-1) protein is Small ribosomal subunit protein uS19.